The sequence spans 759 residues: Protein MEI2-like 3 (759 aa).

RRM domains lie at 166–239 (RTLF…FSIP) and 251–324 (GTLV…HSRP).

Functionally, probable RNA-binding protein that plays a role in meiosis and vegetative growth. The chain is Protein MEI2-like 3 (ML3) from Arabidopsis thaliana (Mouse-ear cress).